The sequence spans 128 residues: Spore germination protein 1/2/3-related protein (128 aa).

Positions 1–26 (MNIRNTLVLLVSTVLVLMSCSIGCYA) are cleaved as a signal peptide. N55 and N119 each carry an N-linked (GlcNAc...) asparagine glycan.

This sequence belongs to the Dictyostelium gerABC family.

It is found in the secreted. This chain is Spore germination protein 1/2/3-related protein, found in Dictyostelium discoideum (Social amoeba).